A 101-amino-acid polypeptide reads, in one-letter code: Apolipoprotein C-II (101 aa).

Positions 1–22 are cleaved as a signal peptide; the sequence is MGTRYFLVGFLILLVLGFEAQG. A lipid binding region spans residues 66-74; sequence TVDEKIRDI. Residues 78 to 101 are lipoprotein lipase cofactor; that stretch reads STAAVTTYAGIITDQVFSILSGED.

It belongs to the apolipoprotein C2 family. In terms of processing, proapolipoprotein C-II is synthesized as a sialic acid containing glycoprotein which is subsequently desialylated prior to its proteolytic processing. Proapolipoprotein C-II, the major form found in plasma undergoes proteolytic cleavage of its N-terminal hexapeptide to generate apolipoprotein C-II, which occurs as the minor form in plasma.

It localises to the secreted. In terms of biological role, component of chylomicrons, very low-density lipoproteins (VLDL), low-density lipoproteins (LDL), and high-density lipoproteins (HDL) in plasma. Plays an important role in lipoprotein metabolism as an activator of lipoprotein lipase. Both proapolipoprotein C-II and apolipoprotein C-II can activate lipoprotein lipase. This Capra hircus aegagrus (Wild goat) protein is Apolipoprotein C-II (APOC2).